Here is a 380-residue protein sequence, read N- to C-terminus: Putative heat stress transcription factor B-4a (380 aa).

Residues 216–245 are hydrophobic repeat HR-A/B; it reads LLRGNAALVQELAHMRKLYSDIIYFVQNHV. 2 disordered regions span residues 268 to 296 and 314 to 380; these read PAGG…TVAE and INEV…VSPP. Low complexity predominate over residues 278–296; the sequence is VRGASGRSATSSSSLTVAE. The Nuclear localization signal motif lies at 346 to 348; that stretch reads RKR.

This sequence belongs to the HSF family. Class B subfamily. As to quaternary structure, homotrimer. Exhibits temperature-dependent phosphorylation.

It localises to the nucleus. Transcriptional regulator that specifically binds DNA of heat shock promoter elements (HSE). The chain is Putative heat stress transcription factor B-4a (HSFB4A) from Oryza sativa subsp. japonica (Rice).